Reading from the N-terminus, the 532-residue chain is KICSTOR complex protein ITFG2 (532 aa).

The FG-GAP 1; atypical repeat unit spans residues 19-48 (FPHAICLGDVDNDTLNELVVGDTSGKLSVY). Position 104 is a phosphoserine (S104). Residues 126-155 (NTKVMLISDIDGDGRCELVVGYTDRVVRAF) form an FG-GAP 2; atypical repeat. The tract at residues 248–271 (PHPQQERLHSPHRQHQASHSPDSS) is disordered.

Part of the KICSTOR complex composed of KPTN, ITFG2, KICS2 and SZT2. SZT2 probably serves as a link between the other three proteins in the KICSTOR complex and may mediate the direct interaction with the GATOR complex via GATOR1. The KICSTOR complex interacts directly with the GATOR1 complex and most probably indirectly with the GATOR2 complex in an amino acid-independent manner.

It is found in the lysosome membrane. Functionally, as part of the KICSTOR complex functions in the amino acid-sensing branch of the TORC1 signaling pathway. Recruits, in an amino acid-independent manner, the GATOR1 complex to the lysosomal membranes and allows its interaction with GATOR2 and the RAG GTPases. Functions upstream of the RAG GTPases and is required to negatively regulate mTORC1 signaling in absence of amino acids. In absence of the KICSTOR complex mTORC1 is constitutively localized to the lysosome and activated. The KICSTOR complex is also probably involved in the regulation of mTORC1 by glucose. The chain is KICSTOR complex protein ITFG2 from Bos taurus (Bovine).